We begin with the raw amino-acid sequence, 148 residues long: Ribose-5-P isomerase B (148 aa).

8-9 contacts D-ribulose 5-phosphate; sequence DE. The active-site Proton acceptor is C65. Residues 66 to 70, N99, R132, and K136 each bind D-ribulose 5-phosphate; that span reads GTGIG.

The protein belongs to the LacAB/RpiB family.

The catalysed reaction is aldehydo-D-ribose 5-phosphate = D-ribulose 5-phosphate. Its pathway is carbohydrate degradation; pentose phosphate pathway; D-ribose 5-phosphate from D-ribulose 5-phosphate (non-oxidative stage): step 1/1. In terms of biological role, catalyzes the interconversion of ribulose-5-P and ribose-5-P. In Listeria innocua serovar 6a (strain ATCC BAA-680 / CLIP 11262), this protein is Ribose-5-P isomerase B.